The chain runs to 425 residues: Dihydroorotase (425 aa).

Zn(2+) contacts are provided by H61 and H63. Residues 63–65 and N95 contribute to the substrate site; that span reads HLR. Positions 146, 175, 224, and 293 each coordinate Zn(2+). K146 carries the N6-carboxylysine modification. D293 is an active-site residue. Substrate-binding positions include H297 and 311 to 312; that span reads PG.

The protein belongs to the metallo-dependent hydrolases superfamily. DHOase family. Class I DHOase subfamily. Zn(2+) serves as cofactor.

The catalysed reaction is (S)-dihydroorotate + H2O = N-carbamoyl-L-aspartate + H(+). Its pathway is pyrimidine metabolism; UMP biosynthesis via de novo pathway; (S)-dihydroorotate from bicarbonate: step 3/3. In terms of biological role, catalyzes the reversible cyclization of carbamoyl aspartate to dihydroorotate. The polypeptide is Dihydroorotase (Aeropyrum pernix (strain ATCC 700893 / DSM 11879 / JCM 9820 / NBRC 100138 / K1)).